The chain runs to 522 residues: Insulinoma-associated protein 1 (522 aa).

A compositionally biased stretch (basic residues) spans 1-12; the sequence is MPRGFLVKRSKK. Residues 1–20 are SNAG domain; it reads MPRGFLVKRSKKSTPVSYRI. Disordered regions lie at residues 1 to 112 and 182 to 235; these read MPRG…SREH and AAEA…KPKA. The tract at residues 2–7 is required and sufficient for interaction with KDM1A; the sequence is PRGFLV. Positions 43-57 are necessary for interaction with CCND1; the sequence is PPAPGPGPVPGPLQP. Residues 43–61 are compositionally biased toward pro residues; that stretch reads PPAPGPGPVPGPLQPPPPT. 2 stretches are compositionally biased toward low complexity: residues 66–75 and 212–228; these read AALAAALACA and ASAA…AKAP. The C2H2-type 1; atypical zinc finger occupies 277 to 297; the sequence is FICQLCKEEYADPFALAQHKC. The C2H2-type 2 zinc-finger motif lies at 305–327; the sequence is YRCPECAKVFSCPANLASHRRWH. The interval 325–373 is disordered; the sequence is RWHKPRPAPAAARACEPETPARAEAREATGGGGSDRDTPSPGGVSESGS. Positions 339 to 351 are enriched in basic and acidic residues; sequence CEPETPARAEARE. C2H2-type zinc fingers lie at residues 378–400, 453–476, and 481–504; these read YECH…LLAH, HLCP…RLLH, and FPCK…NKCH.

It belongs to the INSM1 family. As to quaternary structure, interacts (via the N-terminal region) with CCND1 (via cyclin N-terminal domain); the interaction competes with the binding of CCND1 to CDK4 during cell cycle progression and increases its transcriptional repressor activity. Interacts with HDAC3; the interaction increases its transcriptional repressor activity. Interacts (via the SNAG domain) with HDAC1. Interacts (via the SNAG domain) with HDAC2. Interacts (via the SNAG domain) with KDM1A. Interacts (via the SNAG domain) with RCOR1. Interacts with SORBS1.

The protein resides in the nucleus. Functionally, sequence-specific DNA-binding transcriptional regulator that plays a key role in neurogenesis and neuroendocrine cell differentiation during embryonic and/or fetal development. Binds to the consensus sequence 5'-[TG][TC][TC][TT][GA]GGG[CG]A-3' in target promoters. Acts as a transcriptional repressor of NEUROD1 and INS expression via its interaction with cyclin CCND1 in a cell cycle-independent manner. Negatively regulates skeletal muscle-specific gene expression in endocrine cells of the pituitary by inhibiting the Notch signaling pathway. Represses target gene transcription by recruiting chromatin-modifying factors, such as HDAC1, HDAC2, HDAC3, KDM1A and RCOR1 histone deacetylases. Binds to its own promoter, suggesting autoregulation as a self-control feedback mechanism. Competes with histone H3 for the same binding site on the histone demethylase complex formed by KDM1A and RCOR1, and thereby inhibits demethylation of histone H3 at 'Lys-4'. Promotes the generation and expansion of neuronal basal progenitor cells in the developing neocortex. Involved in the differentiation of endocrine cells of the developing anterior pituitary gland, of the pancreas and intestine, and of sympatho-adrenal cells in the peripheral nervous system. Promotes cell cycle signaling arrest and inhibition of cellular proliferation. The polypeptide is Insulinoma-associated protein 1 (INSM1) (Bos taurus (Bovine)).